A 194-amino-acid chain; its full sequence is E3 ubiquitin-protein ligase RNF185 (194 aa).

Positions 1–27 (MASAAASESSSSSSSSSAGAANGQSAG) are enriched in low complexity. A disordered region spans residues 1-32 (MASAAASESSSSSSSSSAGAANGQSAGESGGG). The interval 31–82 (GGGAQDSTFECNICLDTSKDAVISLCGHLFCWPCLHQWLETRPNRQVCPVCK) is required for ubiquitin ligase activity and protection against ER stress-induced cell death. The segment at 41–82 (CNICLDTSKDAVISLCGHLFCWPCLHQWLETRPNRQVCPVCK) adopts an RING-type zinc-finger fold. Residues 92-126 (PLYGRGSTGQQDPREKTPPRPQGQRPEPENRGGFQ) form a disordered region. A run of 2 helical transmembrane segments spans residues 133 to 153 (GGFQMSFGIGAFPFGIFATAF) and 174 to 194 (QFLSRLFLFVALLIMFWLLIA).

It localises to the mitochondrion outer membrane. It is found in the endoplasmic reticulum membrane. The catalysed reaction is S-ubiquitinyl-[E2 ubiquitin-conjugating enzyme]-L-cysteine + [acceptor protein]-L-lysine = [E2 ubiquitin-conjugating enzyme]-L-cysteine + N(6)-ubiquitinyl-[acceptor protein]-L-lysine.. It participates in protein modification; protein ubiquitination. In terms of biological role, E3 ubiquitin-protein ligase that regulates selective mitochondrial autophagy by mediating 'Lys-63'-linked polyubiquitination. Acts in the endoplasmic reticulum (ER)-associated degradation (ERAD) pathway, which targets misfolded proteins that accumulate in the endoplasmic reticulum (ER) for ubiquitination and subsequent proteasome-mediated degradation. Protects cells from ER stress-induced apoptosis. Responsible for the cotranslational ubiquitination and degradation of CFTR in the ERAD pathway. Also acts as a regulator of the innate antiviral response by catalyzing 'Lys-27'-linked polyubiquitination of CGAS, thereby promoting CGAS cyclic GMP-AMP synthase activity. Preferentially associates with the E2 enzymes UBE2J1 and UBE2J2. The polypeptide is E3 ubiquitin-protein ligase RNF185 (rnf185) (Danio rerio (Zebrafish)).